A 366-amino-acid polypeptide reads, in one-letter code: Ribosomal RNA large subunit methyltransferase M (366 aa).

S-adenosyl-L-methionine contacts are provided by residues serine 188, 221-224 (CPGG), aspartate 240, aspartate 260, and aspartate 277. Lysine 306 functions as the Proton acceptor in the catalytic mechanism.

It belongs to the class I-like SAM-binding methyltransferase superfamily. RNA methyltransferase RlmE family. RlmM subfamily. Monomer.

It is found in the cytoplasm. The enzyme catalyses cytidine(2498) in 23S rRNA + S-adenosyl-L-methionine = 2'-O-methylcytidine(2498) in 23S rRNA + S-adenosyl-L-homocysteine + H(+). Functionally, catalyzes the 2'-O-methylation at nucleotide C2498 in 23S rRNA. The protein is Ribosomal RNA large subunit methyltransferase M of Shigella dysenteriae serotype 1 (strain Sd197).